The following is a 61-amino-acid chain: Small ribosomal subunit protein uS14B (61 aa).

Positions 24, 27, 40, and 43 each coordinate Zn(2+).

Belongs to the universal ribosomal protein uS14 family. Zinc-binding uS14 subfamily. In terms of assembly, part of the 30S ribosomal subunit. Contacts proteins S3 and S10. Zn(2+) is required as a cofactor.

Its function is as follows. Binds 16S rRNA, required for the assembly of 30S particles and may also be responsible for determining the conformation of the 16S rRNA at the A site. This chain is Small ribosomal subunit protein uS14B, found in Bacillus velezensis (strain DSM 23117 / BGSC 10A6 / LMG 26770 / FZB42) (Bacillus amyloliquefaciens subsp. plantarum).